We begin with the raw amino-acid sequence, 180 residues long: Large ribosomal subunit protein uL5 (180 aa).

This sequence belongs to the universal ribosomal protein uL5 family. As to quaternary structure, part of the 50S ribosomal subunit; part of the 5S rRNA/L5/L18/L25 subcomplex. Contacts the 5S rRNA and the P site tRNA. Forms a bridge to the 30S subunit in the 70S ribosome.

This is one of the proteins that bind and probably mediate the attachment of the 5S RNA into the large ribosomal subunit, where it forms part of the central protuberance. In the 70S ribosome it contacts protein S13 of the 30S subunit (bridge B1b), connecting the 2 subunits; this bridge is implicated in subunit movement. Contacts the P site tRNA; the 5S rRNA and some of its associated proteins might help stabilize positioning of ribosome-bound tRNAs. This is Large ribosomal subunit protein uL5 from Rippkaea orientalis (strain PCC 8801 / RF-1) (Cyanothece sp. (strain PCC 8801)).